We begin with the raw amino-acid sequence, 201 residues long: Small ribosomal subunit protein uS4c (201 aa).

Positions 15 to 44 are disordered; the sequence is LGALPGLTSKRPKTGNDLKNQSRSGKKSQY. The region spanning 89–150 is the S4 RNA-binding domain; that stretch reads MRLDNILFRL…EKKSRTLIQN (62 aa).

Belongs to the universal ribosomal protein uS4 family. Part of the 30S ribosomal subunit. Contacts protein S5. The interaction surface between S4 and S5 is involved in control of translational fidelity.

It is found in the plastid. The protein localises to the chloroplast. One of the primary rRNA binding proteins, it binds directly to 16S rRNA where it nucleates assembly of the body of the 30S subunit. In terms of biological role, with S5 and S12 plays an important role in translational accuracy. The polypeptide is Small ribosomal subunit protein uS4c (rps4) (Cucumis sativus (Cucumber)).